Here is a 118-residue protein sequence, read N- to C-terminus: Small ribosomal subunit protein uS13 (118 aa).

The disordered stretch occupies residues 94–118 (SLPLRGQRTKTNARTRKGPRKPIKK).

Belongs to the universal ribosomal protein uS13 family. As to quaternary structure, part of the 30S ribosomal subunit. Forms a loose heterodimer with protein S19. Forms two bridges to the 50S subunit in the 70S ribosome.

Located at the top of the head of the 30S subunit, it contacts several helices of the 16S rRNA. In the 70S ribosome it contacts the 23S rRNA (bridge B1a) and protein L5 of the 50S subunit (bridge B1b), connecting the 2 subunits; these bridges are implicated in subunit movement. Contacts the tRNAs in the A and P-sites. The chain is Small ribosomal subunit protein uS13 from Vibrio parahaemolyticus serotype O3:K6 (strain RIMD 2210633).